Reading from the N-terminus, the 104-residue chain is Pterin-4-alpha-carbinolamine dehydratase (104 aa).

Ala2 carries the post-translational modification N-acetylalanine. Residues 61–63 (DHH) and 78–81 (STHE) contribute to the substrate site.

Belongs to the pterin-4-alpha-carbinolamine dehydratase family. As to quaternary structure, homotetramer and homodimer. Heterotetramer with HNF1A; formed by a dimer of dimers. Interacts with HNF1B (via HNF-p1 domain); the interaction increases HNF1B transactivation activity.

The protein localises to the cytoplasm. The protein resides in the nucleus. It carries out the reaction (4aS,6R)-4a-hydroxy-L-erythro-5,6,7,8-tetrahydrobiopterin = (6R)-L-erythro-6,7-dihydrobiopterin + H2O. In terms of biological role, involved in tetrahydrobiopterin biosynthesis. Seems to both prevent the formation of 7-pterins and accelerate the formation of quinonoid-BH2. Coactivator for HNF1A-dependent transcription. Regulates the dimerization of homeodomain protein HNF1A and enhances its transcriptional activity. Also acts as a coactivator for HNF1B-dependent transcription. In Rattus norvegicus (Rat), this protein is Pterin-4-alpha-carbinolamine dehydratase (Pcbd1).